We begin with the raw amino-acid sequence, 394 residues long: Guanine nucleotide-binding protein G(s) subunit alpha (394 aa).

The disordered stretch occupies residues 1 to 23; sequence MGCLGNSKTEDQRNEEKAQREAN. The N-palmitoyl glycine moiety is linked to residue Gly2. Cys3 carries S-palmitoyl cysteine lipidation. Positions 8–23 are enriched in basic and acidic residues; sequence KTEDQRNEEKAQREAN. The region spanning 39–394 is the G-alpha domain; it reads ATHRLLLLGA…RMHLRQYELL (356 aa). A G1 motif region spans residues 42–55; that stretch reads RLLLLGAGESGKST. Position 47–55 (47–55) interacts with GTP; the sequence is GAGESGKST. Ser54 lines the Mg(2+) pocket. The segment at 68–90 is disordered; it reads FNGEGGEEDPQAARSNSDGEKAT. The tract at residues 196–204 is G2 motif; it reads DLLRCRVLT. Residues 197 to 204, 223 to 227, 292 to 295, and Ala366 contribute to the GTP site; these read LLRCRVLT, DVGGQ, and NKQD. Thr204 is a Mg(2+) binding site. The tract at residues 219–228 is G3 motif; sequence FHMFDVGGQR. Residues 288 to 295 form a G4 motif region; the sequence is ILFLNKQD. A G5 motif region spans residues 364-369; that stretch reads TCAVDT.

This sequence belongs to the G-alpha family. G(s) subfamily. Heterotrimeric G proteins are composed of 3 units; alpha, beta and gamma. The alpha chain contains the guanine nucleotide binding site. Interacts with CRY1; the interaction may block GPCR-mediated regulation of cAMP concentrations. Interacts with ADCY6 and stimulates its adenylyl cyclase activity. Interacts with ADCY2 and ADCY5. Stimulates the ADCY5 adenylyl cyclase activity. Interaction with SASH1.

The protein resides in the cell membrane. Guanine nucleotide-binding proteins (G proteins) function as transducers in numerous signaling pathways controlled by G protein-coupled receptors (GPCRs). Signaling involves the activation of adenylyl cyclases, resulting in increased levels of the signaling molecule cAMP. GNAS functions downstream of several GPCRs, including beta-adrenergic receptors. Stimulates the Ras signaling pathway via RAPGEF2. This Cricetulus griseus (Chinese hamster) protein is Guanine nucleotide-binding protein G(s) subunit alpha (GNAS).